The following is a 774-amino-acid chain: Fe(3+) dicitrate transport protein FecA (774 aa).

An N-terminal signal peptide occupies residues M1–A33. The short motif at F56–S63 is the TonB box element. The 122-residue stretch at D129 to R250 folds into the TBDR plug domain. Residues D255–F774 form the TBDR beta-barrel domain. The TonB C-terminal box motif lies at G757–F774.

The protein belongs to the TonB-dependent receptor family. Interacts (via periplasmic N-terminus) with FecR (via periplasmic C-terminus).

The protein localises to the cell outer membrane. FecA is the outer membrane receptor protein in the Fe(3+) dicitrate transport system. This is Fe(3+) dicitrate transport protein FecA (fecA) from Escherichia coli (strain K12).